A 222-amino-acid polypeptide reads, in one-letter code: Protein THYLAKOID ASSEMBLY 8, chloroplastic (222 aa).

Residues 1–32 (MALSLSQTRPPSLSHSHTLSVIVPKRTFVSIR) constitute a chloroplast transit peptide. PPR repeat units lie at residues 115–149 (DLVL…DQRS) and 150–184 (DDKA…GWGS).

Belongs to the PPR family. P subfamily.

It localises to the plastid. The protein resides in the chloroplast thylakoid membrane. In terms of biological role, essential protein required during embryogenesis. Mediates group II organellar RNA introns splicing (e.g. ycf3-2 and trnA). Binds weakly to specific RNA. Promotes the biogenesis of chloroplast thylakoid membranes. This chain is Protein THYLAKOID ASSEMBLY 8, chloroplastic, found in Arabidopsis thaliana (Mouse-ear cress).